The sequence spans 467 residues: Constitutive acid phosphatase (467 aa).

Residues 1–17 form the signal peptide; it reads MFKSVVYSVLAAALVNA. Residue histidine 75 is the Nucleophile of the active site. 6 N-linked (GlcNAc...) asparagine glycosylation sites follow: asparagine 97, asparagine 103, asparagine 162, asparagine 192, asparagine 250, and asparagine 315. The active-site Proton donor is the aspartate 338. N-linked (GlcNAc...) asparagine glycosylation is found at asparagine 356, asparagine 390, asparagine 439, asparagine 445, asparagine 456, and asparagine 461.

The protein belongs to the histidine acid phosphatase family.

The catalysed reaction is a phosphate monoester + H2O = an alcohol + phosphate. The protein is Constitutive acid phosphatase (PHO3) of Saccharomyces cerevisiae (strain ATCC 204508 / S288c) (Baker's yeast).